Consider the following 202-residue polypeptide: Adapter protein MecA 2 (202 aa).

It belongs to the MecA family. Homodimer.

Enables the recognition and targeting of unfolded and aggregated proteins to the ClpC protease or to other proteins involved in proteolysis. Acts negatively in the development of competence by binding ComK and recruiting it to the ClpCP protease. When overexpressed, inhibits sporulation. Also involved in Spx degradation by ClpC. The polypeptide is Adapter protein MecA 2 (mecA2) (Bacillus anthracis).